Here is a 129-residue protein sequence, read N- to C-terminus: Small ribosomal subunit protein uS8 (129 aa).

Belongs to the universal ribosomal protein uS8 family. In terms of assembly, part of the 30S ribosomal subunit.

In terms of biological role, one of the primary rRNA binding proteins, it binds directly to 16S rRNA central domain where it helps coordinate assembly of the platform of the 30S subunit. This is Small ribosomal subunit protein uS8 from Thermofilum pendens (strain DSM 2475 / Hrk 5).